Here is a 202-residue protein sequence, read N- to C-terminus: Dephospho-CoA kinase (202 aa).

Residues 6–202 (KISVTGDPSS…QCFKALKGTI (197 aa)) form the DPCK domain. An ATP-binding site is contributed by 14–19 (SSGKTE).

This sequence belongs to the CoaE family.

The protein localises to the cytoplasm. It carries out the reaction 3'-dephospho-CoA + ATP = ADP + CoA + H(+). Its pathway is cofactor biosynthesis; coenzyme A biosynthesis; CoA from (R)-pantothenate: step 5/5. Its function is as follows. Catalyzes the phosphorylation of the 3'-hydroxyl group of dephosphocoenzyme A to form coenzyme A. The chain is Dephospho-CoA kinase from Chlamydia muridarum (strain MoPn / Nigg).